The primary structure comprises 428 residues: Histidine--tRNA ligase (428 aa).

This sequence belongs to the class-II aminoacyl-tRNA synthetase family. Homodimer.

It localises to the cytoplasm. It carries out the reaction tRNA(His) + L-histidine + ATP = L-histidyl-tRNA(His) + AMP + diphosphate + H(+). The chain is Histidine--tRNA ligase from Mesomycoplasma hyopneumoniae (strain J / ATCC 25934 / NCTC 10110) (Mycoplasma hyopneumoniae).